A 696-amino-acid polypeptide reads, in one-letter code: Probable E3 ubiquitin ligase complex SCF subunit sconB (696 aa).

A compositionally biased stretch (basic and acidic residues) spans 1–12; the sequence is MDAHELSFRDGH. Residues 1–72 form a disordered region; sequence MDAHELSFRD…HSFNTQKPIR (72 aa). Residues 55–69 show a composition bias toward polar residues; sequence PGSTQDKPHSFNTQK. The 47-residue stretch at 193–239 folds into the F-box domain; it reads IDFLTALPPEISFKILCYLDTTSLCKAAQVSRRWRALADDDVVWHRM. The segment at 290–314 is disordered; the sequence is SATIETAAAGSKRKPESGKEDTAMV. Residues 302–313 show a composition bias toward basic and acidic residues; it reads RKPESGKEDTAM. WD repeat units lie at residues 365–402, 405–444, 446–482, 484–525, 579–622, 623–662, and 665–696; these read GHSN…ELRT, GHQS…STYS, HRGG…TCLL, GHTD…RTFH, DTPS…CLRT, FFGH…CERT, and GHSG…SFQT. The tract at residues 554–596 is disordered; sequence NVSVTSGDSPAASPQALPGFDGQTSDTPSSAFGPAFDDGRPSP.

The protein belongs to the WD repeat MET30/SCONB/SCON-2 family. In terms of assembly, component of the SCF(sconB) E3 ubiquitin ligase complex.

It functions in the pathway protein modification; protein ubiquitination. In terms of biological role, component of the SCF(sconB) E3 ubiquitin ligase complex involved in the regulation of sulfur metabolite repression, probably by mediating the inactivation or degradation of the metR transcription factor. This chain is Probable E3 ubiquitin ligase complex SCF subunit sconB (sconB), found in Aspergillus fumigatus (strain ATCC MYA-4609 / CBS 101355 / FGSC A1100 / Af293) (Neosartorya fumigata).